A 402-amino-acid chain; its full sequence is Phosphoglycerate kinase (402 aa).

Substrate contacts are provided by residues 21 to 23, Arg36, 59 to 62, Arg114, and Arg147; these read DLN and HLGR. Residues Lys202, Glu329, and 355-358 each bind ATP; that span reads GGDT.

It belongs to the phosphoglycerate kinase family. In terms of assembly, monomer.

It is found in the cytoplasm. The catalysed reaction is (2R)-3-phosphoglycerate + ATP = (2R)-3-phospho-glyceroyl phosphate + ADP. Its pathway is carbohydrate degradation; glycolysis; pyruvate from D-glyceraldehyde 3-phosphate: step 2/5. This Psychrobacter sp. (strain PRwf-1) protein is Phosphoglycerate kinase.